We begin with the raw amino-acid sequence, 95 residues long: uncharacterized protein (95 aa).

An N-terminal signal peptide occupies residues 1–19; sequence MAILMLSLQLILLLIPSIS. Residues Asn38 and Asn41 are each glycosylated (N-linked (GlcNAc...) asparagine).

The protein resides in the secreted. This is an uncharacterized protein from Homo sapiens (Human).